We begin with the raw amino-acid sequence, 220 residues long: Octanoyltransferase (220 aa).

The 182-residue stretch at 27–208 (PGTADEIWLC…QLARAHGQAV (182 aa)) folds into the BPL/LPL catalytic domain. Residues 66–73 (RGGQVTYH), 139–141 (ALG), and 152–154 (GLA) contribute to the substrate site. Cys170 (acyl-thioester intermediate) is an active-site residue.

The protein belongs to the LipB family.

It localises to the cytoplasm. It catalyses the reaction octanoyl-[ACP] + L-lysyl-[protein] = N(6)-octanoyl-L-lysyl-[protein] + holo-[ACP] + H(+). Its pathway is protein modification; protein lipoylation via endogenous pathway; protein N(6)-(lipoyl)lysine from octanoyl-[acyl-carrier-protein]: step 1/2. Its function is as follows. Catalyzes the transfer of endogenously produced octanoic acid from octanoyl-acyl-carrier-protein onto the lipoyl domains of lipoate-dependent enzymes. Lipoyl-ACP can also act as a substrate although octanoyl-ACP is likely to be the physiological substrate. The protein is Octanoyltransferase of Bordetella pertussis (strain Tohama I / ATCC BAA-589 / NCTC 13251).